The chain runs to 354 residues: ATP-dependent (S)-NAD(P)H-hydrate dehydratase (354 aa).

A YjeF C-terminal domain is found at 42–350 (AENILRAITP…ECLGRSLEDI (309 aa)). (6S)-NADPHX-binding positions include glycine 155 and 208 to 214 (NVNEYKR). Residues 248-252 (KGKSD) and 267-276 (GSPRRCGGQG) contribute to the ATP site. Aspartate 277 is a binding site for (6S)-NADPHX.

Belongs to the NnrD/CARKD family. Mg(2+) is required as a cofactor.

It catalyses the reaction (6S)-NADHX + ATP = ADP + phosphate + NADH + H(+). It carries out the reaction (6S)-NADPHX + ATP = ADP + phosphate + NADPH + H(+). Functionally, catalyzes the dehydration of the S-form of NAD(P)HX at the expense of ATP, which is converted to ADP. Together with NAD(P)HX epimerase, which catalyzes the epimerization of the S- and R-forms, the enzyme allows the repair of both epimers of NAD(P)HX, a damaged form of NAD(P)H that is a result of enzymatic or heat-dependent hydration. The polypeptide is ATP-dependent (S)-NAD(P)H-hydrate dehydratase (Vitis vinifera (Grape)).